An 878-amino-acid polypeptide reads, in one-letter code: Pyruvate dehydrogenase phosphatase regulatory subunit, mitochondrial (878 aa).

A mitochondrion-targeting transit peptide spans 1-93; that stretch reads MLYRLLSIVQ…CAGILSTARH (93 aa).

It belongs to the GcvT family. Heterodimer of a catalytic (PDP1) and a regulatory (PDPR) subunit.

The protein localises to the mitochondrion matrix. In terms of biological role, decreases the sensitivity of PDP1 to magnesium ions, and this inhibition is reversed by the polyamine spermine. The protein is Pyruvate dehydrogenase phosphatase regulatory subunit, mitochondrial (Pdpr) of Mus musculus (Mouse).